The following is a 366-amino-acid chain: Peptide chain release factor 2 (366 aa).

Gln251 bears the N5-methylglutamine mark.

The protein belongs to the prokaryotic/mitochondrial release factor family. In terms of processing, methylated by PrmC. Methylation increases the termination efficiency of RF2.

It is found in the cytoplasm. Its function is as follows. Peptide chain release factor 2 directs the termination of translation in response to the peptide chain termination codons UGA and UAA. This Campylobacter lari (strain RM2100 / D67 / ATCC BAA-1060) protein is Peptide chain release factor 2.